Consider the following 423-residue polypeptide: Calcium up-regulated protein A (423 aa).

A compositionally biased stretch (basic and acidic residues) spans 1–19 (MINIEDISKSSNESEEKQL). The disordered stretch occupies residues 1–27 (MINIEDISKSSNESEEKQLKSTSTSSK). 2 consecutive Ricin B-type lectin domains span residues 27-147 (KPKY…WTTF) and 118-251 (QGNG…WGIN).

It belongs to the cup family.

It is found in the cytoplasm. Its subcellular location is the membrane. Functionally, may play an important role in stabilizing and/or regulating the cell membrane during Ca(2+) stress or certain stages of development. The sequence is that of Calcium up-regulated protein A (cupA) from Dictyostelium discoideum (Social amoeba).